A 358-amino-acid chain; its full sequence is Glutamate--cysteine ligase (358 aa).

The protein belongs to the glutamate--cysteine ligase type 2 family. YbdK subfamily.

The catalysed reaction is L-cysteine + L-glutamate + ATP = gamma-L-glutamyl-L-cysteine + ADP + phosphate + H(+). Its function is as follows. Catalyzes the synthesis of gamma-glutamylcysteine (gamma-GC), the main low-molecular-weight thiol compound instead of glutathione in halophilic archaea. This is Glutamate--cysteine ligase from Haloferax volcanii (strain ATCC 29605 / DSM 3757 / JCM 8879 / NBRC 14742 / NCIMB 2012 / VKM B-1768 / DS2) (Halobacterium volcanii).